The sequence spans 78 residues: Large ribosomal subunit protein bL28 (78 aa).

The disordered stretch occupies residues 1–20 (MSRVCQVTGKRPVTGNNRSH).

The protein belongs to the bacterial ribosomal protein bL28 family.

In Vibrio campbellii (strain ATCC BAA-1116), this protein is Large ribosomal subunit protein bL28.